A 223-amino-acid polypeptide reads, in one-letter code: Cytochrome c biogenesis ATP-binding export protein CcmA (223 aa).

Residues 1 to 223 (MRSLACERDE…KSDMAVGNDY (223 aa)) form the ABC transporter domain. Residue 31–38 (GSNGAGKT) participates in ATP binding.

The protein belongs to the ABC transporter superfamily. CcmA exporter (TC 3.A.1.107) family. As to quaternary structure, the complex is composed of two ATP-binding proteins (CcmA) and two transmembrane proteins (CcmB).

It localises to the cell inner membrane. It catalyses the reaction heme b(in) + ATP + H2O = heme b(out) + ADP + phosphate + H(+). Its function is as follows. Part of the ABC transporter complex CcmAB involved in the biogenesis of c-type cytochromes; once thought to export heme, this seems not to be the case, but its exact role is uncertain. Responsible for energy coupling to the transport system. In Saccharophagus degradans (strain 2-40 / ATCC 43961 / DSM 17024), this protein is Cytochrome c biogenesis ATP-binding export protein CcmA.